A 298-amino-acid chain; its full sequence is Acetyl-coenzyme A carboxylase carboxyl transferase subunit beta 1 (298 aa).

Residues 26–294 (MWVKCPSCGD…RAADVQNAPA (269 aa)) form the CoA carboxyltransferase N-terminal domain. 4 residues coordinate Zn(2+): Cys30, Cys33, Cys49, and Cys51. The segment at 30-51 (CPSCGDLIYTRQFSDNLKVCKC) adopts a C4-type zinc-finger fold.

Belongs to the AccD/PCCB family. As to quaternary structure, acetyl-CoA carboxylase is a heterohexamer composed of biotin carboxyl carrier protein (AccB), biotin carboxylase (AccC) and two subunits each of ACCase subunit alpha (AccA) and ACCase subunit beta (AccD). Requires Zn(2+) as cofactor.

The protein resides in the cytoplasm. It catalyses the reaction N(6)-carboxybiotinyl-L-lysyl-[protein] + acetyl-CoA = N(6)-biotinyl-L-lysyl-[protein] + malonyl-CoA. Its pathway is lipid metabolism; malonyl-CoA biosynthesis; malonyl-CoA from acetyl-CoA: step 1/1. Its function is as follows. Component of the acetyl coenzyme A carboxylase (ACC) complex. Biotin carboxylase (BC) catalyzes the carboxylation of biotin on its carrier protein (BCCP) and then the CO(2) group is transferred by the transcarboxylase to acetyl-CoA to form malonyl-CoA. This chain is Acetyl-coenzyme A carboxylase carboxyl transferase subunit beta 1, found in Roseiflexus castenholzii (strain DSM 13941 / HLO8).